Consider the following 262-residue polypeptide: Type II restriction enzyme HinfI (262 aa).

It catalyses the reaction Endonucleolytic cleavage of DNA to give specific double-stranded fragments with terminal 5'-phosphates.. A P subtype restriction enzyme that recognizes the double-stranded sequence 5'-GANTC-3' and cleaves after G-1. The protein is Type II restriction enzyme HinfI (hinfIR) of Haemophilus influenzae.